We begin with the raw amino-acid sequence, 266 residues long: Shikimate dehydrogenase (NADP(+)) (266 aa).

Residues 16 to 18 and Thr65 each bind shikimate; that span reads SKS. The Proton acceptor role is filled by Lys69. Residues Asn90 and Asp105 each contribute to the shikimate site. NADP(+)-binding positions include 128–132 and Leu211; that span reads GAGGS. Tyr213 contacts shikimate. Gly233 lines the NADP(+) pocket.

It belongs to the shikimate dehydrogenase family. Homodimer.

It carries out the reaction shikimate + NADP(+) = 3-dehydroshikimate + NADPH + H(+). Its pathway is metabolic intermediate biosynthesis; chorismate biosynthesis; chorismate from D-erythrose 4-phosphate and phosphoenolpyruvate: step 4/7. Its function is as follows. Involved in the biosynthesis of the chorismate, which leads to the biosynthesis of aromatic amino acids. Catalyzes the reversible NADPH linked reduction of 3-dehydroshikimate (DHSA) to yield shikimate (SA). This chain is Shikimate dehydrogenase (NADP(+)), found in Helicobacter pylori (strain J99 / ATCC 700824) (Campylobacter pylori J99).